The primary structure comprises 131 residues: Profilin-3 (131 aa).

Belongs to the profilin family. Occurs in many kinds of cells as a complex with monomeric actin in a 1:1 ratio.

It localises to the cytoplasm. The protein resides in the cytoskeleton. Functionally, binds to actin and affects the structure of the cytoskeleton. At high concentrations, profilin prevents the polymerization of actin, whereas it enhances it at low concentrations. By binding to PIP2, it inhibits the formation of IP3 and DG. In Triticum aestivum (Wheat), this protein is Profilin-3 (PRO3).